A 449-amino-acid polypeptide reads, in one-letter code: Glucose-6-phosphate isomerase (449 aa).

Glu-291 functions as the Proton donor in the catalytic mechanism. Residues His-312 and Lys-426 contribute to the active site.

The protein belongs to the GPI family.

The protein localises to the cytoplasm. The catalysed reaction is alpha-D-glucose 6-phosphate = beta-D-fructose 6-phosphate. Its pathway is carbohydrate biosynthesis; gluconeogenesis. It participates in carbohydrate degradation; glycolysis; D-glyceraldehyde 3-phosphate and glycerone phosphate from D-glucose: step 2/4. In terms of biological role, catalyzes the reversible isomerization of glucose-6-phosphate to fructose-6-phosphate. The protein is Glucose-6-phosphate isomerase of Streptococcus mutans serotype c (strain ATCC 700610 / UA159).